Here is a 434-residue protein sequence, read N- to C-terminus: Phosphomethylpyrimidine synthase (434 aa).

Residues Asn74, Met103, Tyr132, His171, 193–195 (SRG), 234–237 (DGIR), and Glu273 each bind substrate. His277 serves as a coordination point for Zn(2+). Tyr300 provides a ligand contact to substrate. Position 341 (His341) interacts with Zn(2+). 3 residues coordinate [4Fe-4S] cluster: Cys417, Cys420, and Cys424.

It belongs to the ThiC family. Homodimer. The cofactor is [4Fe-4S] cluster.

It catalyses the reaction 5-amino-1-(5-phospho-beta-D-ribosyl)imidazole + S-adenosyl-L-methionine = 4-amino-2-methyl-5-(phosphooxymethyl)pyrimidine + CO + 5'-deoxyadenosine + formate + L-methionine + 3 H(+). The protein operates within cofactor biosynthesis; thiamine diphosphate biosynthesis. Its function is as follows. Catalyzes the synthesis of the hydroxymethylpyrimidine phosphate (HMP-P) moiety of thiamine from aminoimidazole ribotide (AIR) in a radical S-adenosyl-L-methionine (SAM)-dependent reaction. This is Phosphomethylpyrimidine synthase from Desulfotalea psychrophila (strain LSv54 / DSM 12343).